The sequence spans 175 residues: NADH-ubiquinone oxidoreductase chain 6 (175 aa).

5 helical membrane passes run 1–21 (MMYM…GFSS), 26–46 (IYGG…VMGL), 47–67 (GGSF…LVVF), 87–107 (VILS…VWMI), and 152–172 (WLVI…IEIT).

Belongs to the complex I subunit 6 family.

The protein resides in the mitochondrion membrane. It carries out the reaction a ubiquinone + NADH + 5 H(+)(in) = a ubiquinol + NAD(+) + 4 H(+)(out). Its function is as follows. Core subunit of the mitochondrial membrane respiratory chain NADH dehydrogenase (Complex I) that is believed to belong to the minimal assembly required for catalysis. Complex I functions in the transfer of electrons from NADH to the respiratory chain. The immediate electron acceptor for the enzyme is believed to be ubiquinone. In Dasypus novemcinctus (Nine-banded armadillo), this protein is NADH-ubiquinone oxidoreductase chain 6 (MT-ND6).